A 177-amino-acid polypeptide reads, in one-letter code: MSRVGKKPVTVPAGVTATVDGQNVKIKGAKGELSFRVPDLVEVSHADGAISVQPRSQTKEARAMWGLSRAQVANLIEGVTKGFEKKLEINGVGYRAAVAGKVLKLSLGYSHDVEYEIPAGITITTPRPVEIIVAGIDKQRVGQIAAEIREYRGPEPYKGKGVKYSDEFIFRKEGKKK.

It belongs to the universal ribosomal protein uL6 family. As to quaternary structure, part of the 50S ribosomal subunit.

In terms of biological role, this protein binds to the 23S rRNA, and is important in its secondary structure. It is located near the subunit interface in the base of the L7/L12 stalk, and near the tRNA binding site of the peptidyltransferase center. The chain is Large ribosomal subunit protein uL6 from Methylobacterium sp. (strain 4-46).